A 189-amino-acid chain; its full sequence is Segregation and condensation protein B (189 aa).

The protein belongs to the ScpB family. Homodimer. Homodimerization may be required to stabilize the binding of ScpA to the Smc head domains. Component of a cohesin-like complex composed of ScpA, ScpB and the Smc homodimer, in which ScpA and ScpB bind to the head domain of Smc. The presence of the three proteins is required for the association of the complex with DNA.

Its subcellular location is the cytoplasm. In terms of biological role, participates in chromosomal partition during cell division. May act via the formation of a condensin-like complex containing Smc and ScpA that pull DNA away from mid-cell into both cell halves. The sequence is that of Segregation and condensation protein B from Streptococcus mitis.